Reading from the N-terminus, the 296-residue chain is Formylmethanofuran--tetrahydromethanopterin formyltransferase-like protein (296 aa).

Belongs to the FTR family.

This Methanothermobacter marburgensis (strain ATCC BAA-927 / DSM 2133 / JCM 14651 / NBRC 100331 / OCM 82 / Marburg) (Methanobacterium thermoautotrophicum) protein is Formylmethanofuran--tetrahydromethanopterin formyltransferase-like protein (ehaS).